The primary structure comprises 132 residues: MSTERKGKIGVAHIYSSFNDTIVHITDITGAETLARYSGGMFVDADRLEGSPYAALKAAMAAAKEAQRKGITHLIVKVRAPGGIKSRIPGPGATAAIRGLSRSQLTLIRVEDVTPIPHDGCRRPHGRRGRRV.

It belongs to the universal ribosomal protein uS11 family. Part of the 30S ribosomal subunit.

In terms of biological role, located on the platform of the 30S subunit. This chain is Small ribosomal subunit protein uS11 (rps11), found in Korarchaeum cryptofilum (strain OPF8).